Consider the following 176-residue polypeptide: RING-H2 finger protein ATL14 (176 aa).

The interval 1-26 is disordered; it reads MSITIPYDGSISREPSPSPPPPKANT. A helical transmembrane segment spans residues 37 to 57; sequence FLIGLIMIPVAITAFIFILTS. An RING-type; atypical zinc finger spans residues 115-157; sequence CVVCIDGFRQGQWCRKLPRCGHVFHRKCVDLWLIKVSTCPICR.

The protein belongs to the RING-type zinc finger family. ATL subfamily.

The protein localises to the membrane. The catalysed reaction is S-ubiquitinyl-[E2 ubiquitin-conjugating enzyme]-L-cysteine + [acceptor protein]-L-lysine = [E2 ubiquitin-conjugating enzyme]-L-cysteine + N(6)-ubiquitinyl-[acceptor protein]-L-lysine.. It functions in the pathway protein modification; protein ubiquitination. This is RING-H2 finger protein ATL14 (ATL14) from Arabidopsis thaliana (Mouse-ear cress).